The chain runs to 229 residues: Putative N-acetylmannosamine-6-phosphate 2-epimerase (229 aa).

The protein belongs to the NanE family.

The enzyme catalyses an N-acyl-D-glucosamine 6-phosphate = an N-acyl-D-mannosamine 6-phosphate. It participates in amino-sugar metabolism; N-acetylneuraminate degradation; D-fructose 6-phosphate from N-acetylneuraminate: step 3/5. Its function is as follows. Converts N-acetylmannosamine-6-phosphate (ManNAc-6-P) to N-acetylglucosamine-6-phosphate (GlcNAc-6-P). This chain is Putative N-acetylmannosamine-6-phosphate 2-epimerase, found in Escherichia coli O139:H28 (strain E24377A / ETEC).